The sequence spans 261 residues: uncharacterized protein (261 aa).

The signal sequence occupies residues 1 to 22; sequence MIHSKKLTLGICLVLLIILIGG. Residue C23 is the site of N-palmitoyl cysteine attachment. A lipid anchor (S-diacylglycerol cysteine) is attached at C23.

It belongs to the staphylococcal tandem lipoprotein family.

It is found in the cell membrane. This is an uncharacterized protein from Staphylococcus aureus (strain USA300).